The chain runs to 406 residues: LIM/homeobox protein Lhx2 (406 aa).

2 consecutive LIM zinc-binding domains span residues 53–105 and 115–168; these read CAGC…CKED and CARC…CRLH. The disordered stretch occupies residues 250-270; it reads DAEHLDRDQPYPSSQKTKRMR. Residues 266–325 constitute a DNA-binding region (homeobox); the sequence is TKRMRTSFKHHQLRTMKSYFAINHNPDAKDLKQLAQKTGLTKRVLQVWFQNARAKFRRNL. Positions 307–323 match the Nuclear localization signal motif; it reads KRVLQVWFQNARAKFRR. The span at 328 to 356 shows a compositional bias: polar residues; it reads QENTGVDKSTDAALQTGTPSGPASELSNA. Disordered stretches follow at residues 328–374 and 387–406; these read QENT…TSPT and GNLE…TNLF. Residues 357–374 are compositionally biased toward low complexity; that stretch reads SLSPSSTPTTLTDLTSPT. Positions 396-406 are enriched in polar residues; the sequence is SPSQTTLTNLF.

Interacts (via LIM domains) with CITED2. Interacts with POU4F2.

It localises to the nucleus. Acts as a transcriptional activator. Stimulates the promoter of the alpha-glycoprotein gene. Transcriptional regulatory protein involved in the control of cell differentiation in developing lymphoid and neural cell types. The protein is LIM/homeobox protein Lhx2 (LHX2) of Homo sapiens (Human).